A 1806-amino-acid chain; its full sequence is Atrochrysone carboxylic acid synthase (1806 aa).

The interval 30–283 (DLQGLFRRLY…SLPVYSGLCH (254 aa)) is N-terminal acylcarrier protein transacylase domain (SAT). One can recognise a Ketosynthase family 3 (KS3) domain in the interval 416–850 (QSKIAIIGMS…GGNTTVCLEE (435 aa)). Catalysis depends on for beta-ketoacyl synthase activity residues Cys589, His725, and His768. Residues 951–1270 (FAFTGQGASY…SLTALHCAGV (320 aa)) are malonyl-CoA:ACP transacylase (MAT) domain. Residues 1340–1659 (TSTVQQIIEE…RILLNRFFTA (320 aa)) are product template (PT) domain. The segment at 1344-1479 (QQIIEESFNG…ASILYDDAAL (136 aa)) is N-terminal hotdog fold. Residues 1344–1654 (QQIIEESFNG…FRRYPRILLN (311 aa)) enclose the PKS/mFAS DH domain. The active-site Proton acceptor; for dehydratase activity is His1376. The C-terminal hotdog fold stretch occupies residues 1506 to 1654 (IANRFTRNMA…FRRYPRILLN (149 aa)). The active-site Proton donor; for dehydratase activity is Asp1565. The tract at residues 1668–1726 (HAAASSTPAPRTKPEPVPVATPATAAAPVAQSPAAPASVTPAPAPAPAPGPTPAAAPAA) is disordered. The segment covering 1685 to 1708 (PVATPATAAAPVAQSPAAPASVTP) has biased composition (low complexity). A compositionally biased stretch (pro residues) spans 1709–1721 (APAPAPAPGPTPA). A Carrier domain is found at 1728-1805 (GESDSVAAKA…DLRSWLLEYY (78 aa)). The residue at position 1765 (Ser1765) is an O-(pantetheine 4'-phosphoryl)serine.

The catalysed reaction is holo-[ACP] + 8 malonyl-CoA + 8 H(+) = atrochrysone carboxyl-[ACP] + 8 CO2 + 8 CoA + 2 H2O. It functions in the pathway secondary metabolite biosynthesis. Atrochrysone carboxylic acid synthase; part of the gene cluster that mediates the biosynthesis of monodictyphenone, a prenyl xanthone derivative. The pathway begins with the synthesis of atrochrysone thioester by the polyketide synthase (PKS) mdpG. The atrochrysone carboxyl ACP thioesterase mdpF then breaks the thioester bond and releases the atrochrysone carboxylic acid from mdpG. The atrochrysone carboxylic acid is then converted to atrochrysone which is further transformed into emodin anthrone. The next step is performed by the anthrone oxygenase mdpH that catalyzes the oxidation of emodinanthrone to emodin. Emodin is further modified to yield monodictyphenone via several steps involving mdpB, mdpC mdpJ, mdpK and mdpL. The short chain dehydrogenase mdpC converts the tautomers of emodin hydroquinone into the 3-hydroxy-3,4-dihydroan-thracen-1(2H)-one derivative. These enzymes with xptA, xptB and xptC are also proposed to be involved in the synthesis of shamixanthone from emodin. Especially, direct reduction of emodin by the short chain dehydrogenase mdpC followed by dehydration catalyzed by the scytalone dehydratase-like protein mdpB gives loss of oxygen and formation of chrysophanol intermediate in two simple steps. This is Atrochrysone carboxylic acid synthase from Emericella nidulans (strain FGSC A4 / ATCC 38163 / CBS 112.46 / NRRL 194 / M139) (Aspergillus nidulans).